The sequence spans 250 residues: 3-deoxy-manno-octulosonate cytidylyltransferase (250 aa).

It belongs to the KdsB family.

The protein resides in the cytoplasm. The catalysed reaction is 3-deoxy-alpha-D-manno-oct-2-ulosonate + CTP = CMP-3-deoxy-beta-D-manno-octulosonate + diphosphate. Its pathway is nucleotide-sugar biosynthesis; CMP-3-deoxy-D-manno-octulosonate biosynthesis; CMP-3-deoxy-D-manno-octulosonate from 3-deoxy-D-manno-octulosonate and CTP: step 1/1. The protein operates within bacterial outer membrane biogenesis; lipopolysaccharide biosynthesis. Functionally, activates KDO (a required 8-carbon sugar) for incorporation into bacterial lipopolysaccharide in Gram-negative bacteria. In Bacteroides thetaiotaomicron (strain ATCC 29148 / DSM 2079 / JCM 5827 / CCUG 10774 / NCTC 10582 / VPI-5482 / E50), this protein is 3-deoxy-manno-octulosonate cytidylyltransferase.